The sequence spans 302 residues: D-alanine--D-alanine ligase (302 aa).

Residues 104–296 (KLVFERFAIP…FPDLVTWLVE (193 aa)) form the ATP-grasp domain. An ATP-binding site is contributed by 130–183 (AMARPYVVKPLDQGSSVGVTIVTSETNDLPFSRDDWPYGRQVMVERFIPGRELT). Residues Asp251, Glu263, and Asn265 each contribute to the Mg(2+) site.

This sequence belongs to the D-alanine--D-alanine ligase family. It depends on Mg(2+) as a cofactor. The cofactor is Mn(2+).

Its subcellular location is the cytoplasm. The catalysed reaction is 2 D-alanine + ATP = D-alanyl-D-alanine + ADP + phosphate + H(+). It participates in cell wall biogenesis; peptidoglycan biosynthesis. Cell wall formation. This is D-alanine--D-alanine ligase from Rhodospirillum rubrum (strain ATCC 11170 / ATH 1.1.1 / DSM 467 / LMG 4362 / NCIMB 8255 / S1).